We begin with the raw amino-acid sequence, 555 residues long: Disabled homolog 1 (555 aa).

The interval 1–26 is disordered; the sequence is MSTETELQVAVKTSAKKDSRKKGQDR. A compositionally biased stretch (basic and acidic residues) spans 15 to 26; it reads AKKDSRKKGQDR. One can recognise a PID domain in the interval 36–189; that stretch reads KGEGVRYKAK…CEQAVYQTIL (154 aa). A phosphotyrosine mark is found at Y198, Y220, and Y232. Disordered stretches follow at residues 386–409 and 469–555; these read PLATVPGTNDSARSSPQSDKPRQK and LTPV…QDGS. Positions 391–403 are enriched in polar residues; the sequence is PGTNDSARSSPQS. Low complexity-rich tracts occupy residues 470 to 479 and 490 to 501; these read TPVTSTTPST and SSPSKSSASHVS. S491 is modified (phosphoserine; by CDK5). Over residues 504–513 the composition is skewed to acidic residues; it reads TADDIFEEGF.

As to quaternary structure, associates with the SH2 domains of SRC, FYN and ABL. Interacts (phosphorylated on tyrosine residues) with CRK and CRKL (via respective SH2 domain). Interacts with SIAH1, LRP8 and VLDLR. Interacts with LRP1. Interacts with APLP1 (via NPXY motif). Interacts with DAB2IP. Interacts with ZSWIM8. Post-translationally, phosphorylated by FYN on Tyr-198 and Tyr-220 upon reelin induction in embryonic neurons. Also phosphorylated on Ser-491 independently of reelin signaling. Ubiquitinated by various cullin-5-RING E3 ubiquitin-protein ligase complexes (ECS complexes) following ligand-binding and phosphorylation, leading to its degradation. Ubiquitinated by the ECS(SOCS7) complex in the cortical plate of the developing cerebral cortex following ligand-binding and phosphorylation by FYN, leading to its degradation by the proteasome. Recognized by ZSWIM8 through a disorder targets misorder mechanism that eliminates misfolded DAB1 via ubiquitination and proteasomal degradation.

Its subcellular location is the cytoplasm. Signaling adapter of the reelin-mediated signaling pathway, which regulates the migration and differentiation of postmitotic neurons during brain development. Mediates intracellular transduction of Reelin signaling following reelin (RELN)-binding to its receptor: acts by docking proteins through its phosphotyrosine residues and PID domain. The sequence is that of Disabled homolog 1 (Dab1) from Rattus norvegicus (Rat).